An 841-amino-acid polypeptide reads, in one-letter code: 27S pre-rRNA (guanosine(2922)-2'-O)-methyltransferase (841 aa).

Gly-58, Trp-60, Asp-78, Asp-94, and Asp-119 together coordinate S-adenosyl-L-methionine. Lys-159 serves as the catalytic Proton acceptor. Residues 360–389 (QEKQRLNVKRERRRKNEMKQKELQRMQMNM) are a coiled coil. A phosphoserine mark is found at Ser-455 and Ser-464. 2 disordered regions span residues 480 to 534 (RDAK…DDEA) and 565 to 654 (NNVE…HSRD). A compositionally biased stretch (basic and acidic residues) spans 505–517 (SLEKKEEEGKDYI). Residues 518–534 (EDNDDEGVEGDSDDDEA) show a composition bias toward acidic residues. Residue Ser-529 is modified to Phosphoserine. Positions 574–585 (NTVNDGIMSSES) are enriched in polar residues. The segment covering 598-607 (HEEMHQKQDE) has biased composition (basic and acidic residues). Composition is skewed to acidic residues over residues 608 to 621 (ADSS…DSDF) and 629 to 641 (ASEE…DSEE). The segment covering 642 to 654 (EKNQTKKEKHSRD) has biased composition (basic and acidic residues).

This sequence belongs to the class I-like SAM-binding methyltransferase superfamily. RNA methyltransferase RlmE family. SPB1 subfamily. As to quaternary structure, component of the nucleolar and nucleoplasmic pre-60S ribosomal particle. Interacts with the snoRNA-associated proteins NOP1 and NOP58.

The protein resides in the nucleus. It localises to the nucleolus. The enzyme catalyses guanosine(2922) in 27S pre-rRNA + S-adenosyl-L-methionine = 2'-O-methylguanosine(2922) in 27S pre-rRNA + S-adenosyl-L-homocysteine + H(+). Required for proper assembly of pre-ribosomal particles during the biogenesis of the 60S ribosomal subunit. Specifically methylates the guanosine in position 2922 of the 25S rRNA at the stage of 27S pre-rRNA maturation. Also methylates the uridine in position 2921 in the absence of methylation of this residue guided by snoRNA snR52 at the stage of 35S pre-rRNA maturation. This is 27S pre-rRNA (guanosine(2922)-2'-O)-methyltransferase from Saccharomyces cerevisiae (strain ATCC 204508 / S288c) (Baker's yeast).